The primary structure comprises 529 residues: Ell-associated factor Eaf (529 aa).

Disordered regions lie at residues 155-235 and 253-529; these read AAGS…PMIT and ANIS…DDDD. A compositionally biased stretch (polar residues) spans 167-186; sequence ENSTMRISSKTKVSTGSRRN. Low complexity-rich tracts occupy residues 194-215, 256-265, 306-315, and 327-346; these read RNSPMQQSSPSRPVVSHRSPQS, SGSSTGSSSG, HQNQQQQQQN, and QQQHQQQMQQQQQQHQQQQQ. Phosphoserine is present on Ser-196. The segment covering 347–359 has biased composition (polar residues); the sequence is RASFSHSNHSNSM. Residues 401–416 are compositionally biased toward acidic residues; it reads DSSDTDSGSDSDDSTD. 4 stretches are compositionally biased toward low complexity: residues 431-451, 469-480, 488-499, and 510-523; these read HQQQHHQMQQQHQQQQQHMHQ, QHQQQQQQPPQQ, QQQQQQQQQQQS, and NDLLQNDLQLSSNS.

It belongs to the EAF family.

The protein resides in the nucleus. Promotes transcriptional elongation by Su(Tpl)/ELL. Essential for development. The chain is Ell-associated factor Eaf from Drosophila grimshawi (Hawaiian fruit fly).